The following is a 143-amino-acid chain: Antiholin-like protein LrgA (143 aa).

Helical transmembrane passes span 6-26, 30-50, 61-81, and 97-117; these read VYSFLSQAFIFSAIMLISNII, LPIPMPSSVIGLVILFSLLCL, LGTALTGIIGFLFVPSGISVI, and VIVVATVILLAVTGLFAQFIL.

Belongs to the CidA/LrgA family. LrgA subfamily.

Its subcellular location is the cell membrane. Its function is as follows. Inhibits the expression or activity of extracellular murein hydrolases by interacting, possibly with LrgB, with the holin-like protein CidA. The LrgAB and CidA proteins may affect the proton motive force of the membrane. May be involved in programmed cell death (PCD), possibly triggering PCD in response to antibiotics and environmental stresses. This Bacillus cereus (strain AH820) protein is Antiholin-like protein LrgA.